A 112-amino-acid polypeptide reads, in one-letter code: Nitrogen regulatory protein P-II (112 aa).

Y51 is subject to O-UMP-tyrosine.

This sequence belongs to the P(II) protein family. In terms of assembly, homotrimer.

In terms of biological role, in nitrogen-limiting conditions, when the ratio of Gln to 2-ketoglutarate decreases, P-II is uridylylated to P-II-UMP. P-II-UMP allows the deadenylation of glutamine synthetase (GS), thus activating the enzyme. Conversely, in nitrogen excess P-II is deuridylated and promotes the adenylation of GS. P-II indirectly controls the transcription of the GS gene (glnA). P-II prevents NR-II-catalyzed conversion of NR-I to NR-I-phosphate, the transcriptional activator of glnA. When P-II is uridylylated to P-II-UMP, these events are reversed. The sequence is that of Nitrogen regulatory protein P-II (glnB) from Klebsiella oxytoca.